Reading from the N-terminus, the 316-residue chain is Protein FLUORESCENT IN BLUE LIGHT, chloroplastic (316 aa).

A chloroplast-targeting transit peptide spans 1–26 (MAALIRCCSSFSHTSGGQPPPRDKSR). A helical transmembrane segment spans residues 125-145 (MFSMPILLLVALIGATVGGLL). A coiled-coil region spans residues 144 to 175 (LLARQRKGELQRLNEQLRQINAALRRQAKIES). 3 TPR repeats span residues 203–236 (LISK…AQSL), 243–276 (KKAA…SKRE), and 283–316 (TEAY…LETD).

In terms of assembly, part of the FLU-containing chloroplast membrane complex composed of FLU, CRD1, PORB, PORC, CHLP and HEMA1. Interacts with HEMA1 (via C-terminus) only in the absence of light. No interaction with HEMA2.

The protein localises to the plastid. The protein resides in the chloroplast membrane. It is found in the chloroplast thylakoid membrane. Negative regulator of tetrapyrrole biosynthesis (including chlorophyll) in chloroplasts, probably via HEMA1 repression. Inhibits especially the magnesium ion Mg(2+) branch of tetrapyrrole biosynthesis, but independently of heme. This chain is Protein FLUORESCENT IN BLUE LIGHT, chloroplastic (FLU), found in Arabidopsis thaliana (Mouse-ear cress).